Here is a 391-residue protein sequence, read N- to C-terminus: Casein kinase II subunit alpha (391 aa).

The segment at 36-41 is interaction with beta subunit; that stretch reads QDDYQL. The Protein kinase domain occupies 39–324; sequence YQLVRKLGRG…AREAMEHPYF (286 aa). ATP contacts are provided by residues 45 to 53 and lysine 68; that span reads LGRGKYSEV. Aspartate 156 (proton acceptor) is an active-site residue. Residues threonine 344 and threonine 360 each carry the phosphothreonine; by CDK1 modification. Phosphoserine; by CDK1 occurs at positions 362 and 370.

The protein belongs to the protein kinase superfamily. Ser/Thr protein kinase family. CK2 subfamily. As to quaternary structure, heterotetramer composed of two catalytic subunits (alpha chain and/or alpha' chain) and two regulatory subunits (beta chains). The tetramer can exist as a combination of 2 alpha/2 beta, 2 alpha'/2 beta or 1 alpha/1 alpha'/2 beta subunits. Also part of a CK2-SPT16-SSRP1 complex composed of SSRP1, SUPT16H, CSNK2A1, CSNK2A2 and CSNK2B, which forms following UV irradiation. Interacts with RNPS1. Interacts with SNAI1. Interacts with PML. Interacts with CCAR2. Interacts with HIRIP3. Phosphorylated at Thr-344, Thr-360, Ser-362 and Ser-370 by CDK1 in prophase and metaphase and dephosphorylated during anaphase. Phosphorylation does not directly affect casein kinase 2 activity, but may contribute to its regulation by forming binding sites for interacting proteins and/or targeting it to different compartments.

The protein resides in the nucleus. The enzyme catalyses L-seryl-[protein] + ATP = O-phospho-L-seryl-[protein] + ADP + H(+). The catalysed reaction is L-threonyl-[protein] + ATP = O-phospho-L-threonyl-[protein] + ADP + H(+). Constitutively active protein kinase whose activity is not directly affected by phosphorylation. Seems to be regulated by level of expression and localization. Functionally, catalytic subunit of a constitutively active serine/threonine-protein kinase complex that phosphorylates a large number of substrates containing acidic residues C-terminal to the phosphorylated serine or threonine. Regulates numerous cellular processes, such as cell cycle progression, apoptosis and transcription, as well as viral infection. May act as a regulatory node which integrates and coordinates numerous signals leading to an appropriate cellular response. During mitosis, functions as a component of the p53/TP53-dependent spindle assembly checkpoint (SAC) that maintains cyclin-B-CDK1 activity and G2 arrest in response to spindle damage. Also required for p53/TP53-mediated apoptosis, phosphorylating 'Ser-392' of p53/TP53 following UV irradiation. Phosphorylates a number of DNA repair proteins in response to DNA damage, such as MDC1, MRE11, RAD9A, RAD51 and HTATSF1, promoting their recruitment to DNA damage sites. Can also negatively regulate apoptosis. Phosphorylates the caspases CASP9 and CASP2 and the apoptotic regulator NOL3. Phosphorylation protects CASP9 from cleavage and activation by CASP8, and inhibits the dimerization of CASP2 and activation of CASP8. Phosphorylates YY1, protecting YY1 from cleavage by CASP7 during apoptosis. Regulates transcription by direct phosphorylation of RNA polymerases I, II, III and IV. Also phosphorylates and regulates numerous transcription factors including NF-kappa-B, STAT1, CREB1, IRF1, IRF2, ATF1, ATF4, SRF, MAX, JUN, FOS, MYC and MYB. Phosphorylates Hsp90 and its co-chaperones FKBP4 and CDC37, which is essential for chaperone function. Mediates sequential phosphorylation of FNIP1, promoting its gradual interaction with Hsp90, leading to activate both kinase and non-kinase client proteins of Hsp90. Regulates Wnt signaling by phosphorylating CTNNB1 and the transcription factor LEF1. Acts as an ectokinase that phosphorylates several extracellular proteins. Phosphorylates PML at 'Ser-565' and primes it for ubiquitin-mediated degradation. Plays an important role in the circadian clock function by phosphorylating BMAL1 at 'Ser-90' which is pivotal for its interaction with CLOCK and which controls CLOCK nuclear entry. Phosphorylates FMR1, promoting FMR1-dependent formation of a membraneless compartment. May phosphorylate histone H2A on 'Ser-1'. The chain is Casein kinase II subunit alpha (Csnk2a1) from Rattus norvegicus (Rat).